A 475-amino-acid polypeptide reads, in one-letter code: uncharacterized protein (475 aa).

Residues 19 to 39 traverse the membrane as a helical segment; it reads LVSAILILSILIWLIITIFFA.

The protein localises to the membrane. This is an uncharacterized protein from Mycoplasma pneumoniae (strain ATCC 29342 / M129 / Subtype 1) (Mycoplasmoides pneumoniae).